Here is a 234-residue protein sequence, read N- to C-terminus: Cysteine proteinase inhibitor 6 (234 aa).

A signal peptide spans Met1–Ala24. An N-acetylalanine modification is found at Met2. Cystatin domains lie at Gly38–Ser126 and Ser145–Glu215. Residues Gln82–Gly86 carry the Secondary area of contact motif. The interval Ser133–Asp154 is disordered. The segment covering Gln140–Asp154 has biased composition (basic and acidic residues). Ser174 bears the Phosphoserine mark.

The protein belongs to the cystatin family. Phytocystatin subfamily.

The protein resides in the secreted. Functionally, specific inhibitor of cysteine proteinases. Probably involved in the regulation of endogenous processes and in defense against pests and pathogens. The sequence is that of Cysteine proteinase inhibitor 6 (CYS6) from Arabidopsis thaliana (Mouse-ear cress).